The chain runs to 133 residues: Peptide methionine sulfoxide reductase MsrB (133 aa).

One can recognise a MsrB domain in the interval leucine 8 to arginine 130. Zn(2+)-binding residues include cysteine 47, cysteine 50, cysteine 96, and cysteine 99. Catalysis depends on cysteine 119, which acts as the Nucleophile.

It belongs to the MsrB Met sulfoxide reductase family. Zn(2+) is required as a cofactor.

The enzyme catalyses L-methionyl-[protein] + [thioredoxin]-disulfide + H2O = L-methionyl-(R)-S-oxide-[protein] + [thioredoxin]-dithiol. The chain is Peptide methionine sulfoxide reductase MsrB from Pseudomonas putida (strain W619).